The following is a 212-amino-acid chain: MGSITRALPLLLLLLLCAHGTASQHHLRLRPLPSEGLPVPDLIENPDPEHDPREQDLSEKTLLKKLGSNFDANFMSIHLPAQLNASAPPELPRLPMPAELKKLDLTETPYGRRVKVGKKARRKFLQWLWMYTHCPVLYTWKDLGLRFWPRYIKEGNCFSERSCSFPEGMSCKPVKAVTKTFLRWYCQGFMRQKYCTWIQVQYPIISQCKCSC.

A signal peptide spans 1-23 (MGSITRALPLLLLLLLCAHGTAS). Positions 37-56 (LPVPDLIENPDPEHDPREQD) are disordered. Over residues 47–56 (DPEHDPREQD) the composition is skewed to basic and acidic residues. N-linked (GlcNAc...) asparagine glycosylation is present at Asn84.

This sequence belongs to the noggin family. As to quaternary structure, homodimer; disulfide-linked.

The protein resides in the secreted. Inhibitor of bone morphogenetic proteins (BMP) signaling. This is Noggin-2 (nog2) from Danio rerio (Zebrafish).